Here is a 125-residue protein sequence, read N- to C-terminus: Fluoride-specific ion channel FluC (125 aa).

The next 2 helical transmembrane spans lie at leucine 4 to isoleucine 24 and tyrosine 34 to leucine 54. Positions 74 and 77 each coordinate Na(+). The helical transmembrane segment at valine 99–valine 119 threads the bilayer.

Belongs to the fluoride channel Fluc/FEX (TC 1.A.43) family.

The protein localises to the cell inner membrane. It catalyses the reaction fluoride(in) = fluoride(out). Na(+) is not transported, but it plays an essential structural role and its presence is essential for fluoride channel function. Fluoride-specific ion channel. Important for reducing fluoride concentration in the cell, thus reducing its toxicity. The sequence is that of Fluoride-specific ion channel FluC from Acidobacterium capsulatum (strain ATCC 51196 / DSM 11244 / BCRC 80197 / JCM 7670 / NBRC 15755 / NCIMB 13165 / 161).